Consider the following 482-residue polypeptide: Putative L-cysteine desulfhydrase 1 (482 aa).

The span at Met-1–Ala-10 shows a compositional bias: acidic residues. Positions Met-1–Ser-45 are disordered. The segment covering Ala-11–Gly-22 has biased composition (low complexity). The residue at position 276 (Lys-276) is an N6-(pyridoxal phosphate)lysine.

This sequence belongs to the class-V pyridoxal-phosphate-dependent aminotransferase family. It depends on pyridoxal 5'-phosphate as a cofactor.

It carries out the reaction L-cysteine + H2O = hydrogen sulfide + pyruvate + NH4(+) + H(+). Its function is as follows. Catalyzes the production of hydrogen sulfide (H2S) from cysteine. This chain is Putative L-cysteine desulfhydrase 1, found in Oryza sativa subsp. japonica (Rice).